A 523-amino-acid polypeptide reads, in one-letter code: REST corepressor 2 (523 aa).

Residues 1–43 (MPSVMEKPSAGSGILSRSRAKTAPNGGQPHSEDDSSEEEHSHD) are disordered. Positions 30 to 43 (HSEDDSSEEEHSHD) are enriched in basic and acidic residues. Phosphoserine is present on residues serine 31, serine 35, serine 36, and serine 63. Residues 44–129 (SMIRVGTNYQ…KSLADLANFT (86 aa)) form the ELM2 domain. A Glycyl lysine isopeptide (Lys-Gly) (interchain with G-Cter in SUMO2) cross-link involves residue lysine 88. Positions 130-181 (PFPDEWTVEDKVLFEQAFGFHGKCFQRIQQMLPDKLIPSLVKYYYSWKKTRS) constitute an SANT 1 domain. The tract at residues 185 to 265 (VMDRQARRLG…RRRPPKGMYL (81 aa)) is disordered. Serine 202 bears the Phosphoserine mark. Residues 248–260 (YRHHPLRTRRRPP) are compositionally biased toward basic residues. Positions 283 to 314 (TLRGLDSQLISLKRQVQSMKQTNSSLRQALEG) form a coiled coil. One can recognise an SANT 2 domain in the interval 327-378 (KFNSRWTTDEQLLAVQAIRRYGKDFGAIAEVIGNKTLTQVKTFFVSYRRRFN). The segment at 387 to 523 (EAEQDGAPTA…AQLEPPAPSL (137 aa)) is disordered. Pro residues predominate over residues 432–459 (SVPPAPPPPPPPTSLSQPPPLLRPPLPT). Positions 460-482 (APTLLRQPPPLQQGRFLQPRLAP) are enriched in low complexity. Arginine 479 bears the Asymmetric dimethylarginine mark.

The protein belongs to the CoREST family.

It localises to the nucleus. May act as a component of a corepressor complex that represses transcription. The sequence is that of REST corepressor 2 (Rcor2) from Rattus norvegicus (Rat).